Consider the following 595-residue polypeptide: Adenine deaminase 2 (595 aa).

It belongs to the metallo-dependent hydrolases superfamily. Adenine deaminase family. Mn(2+) is required as a cofactor.

The enzyme catalyses adenine + H2O + H(+) = hypoxanthine + NH4(+). The chain is Adenine deaminase 2 from Rhizobium etli (strain ATCC 51251 / DSM 11541 / JCM 21823 / NBRC 15573 / CFN 42).